The sequence spans 388 residues: Succinate--CoA ligase [ADP-forming] subunit beta (388 aa).

The region spanning Lys-9–His-244 is the ATP-grasp domain. ATP-binding positions include Lys-46, Gly-53–Gly-55, Glu-99, Thr-102, and Glu-107. Asn-199 and Asp-213 together coordinate Mg(2+). Residues Asn-264 and Gly-321–Val-323 contribute to the substrate site.

It belongs to the succinate/malate CoA ligase beta subunit family. Heterotetramer of two alpha and two beta subunits. Requires Mg(2+) as cofactor.

It carries out the reaction succinate + ATP + CoA = succinyl-CoA + ADP + phosphate. The catalysed reaction is GTP + succinate + CoA = succinyl-CoA + GDP + phosphate. It participates in carbohydrate metabolism; tricarboxylic acid cycle; succinate from succinyl-CoA (ligase route): step 1/1. Succinyl-CoA synthetase functions in the citric acid cycle (TCA), coupling the hydrolysis of succinyl-CoA to the synthesis of either ATP or GTP and thus represents the only step of substrate-level phosphorylation in the TCA. The beta subunit provides nucleotide specificity of the enzyme and binds the substrate succinate, while the binding sites for coenzyme A and phosphate are found in the alpha subunit. The chain is Succinate--CoA ligase [ADP-forming] subunit beta from Erwinia tasmaniensis (strain DSM 17950 / CFBP 7177 / CIP 109463 / NCPPB 4357 / Et1/99).